The sequence spans 1266 residues: Intermembrane phospholipid transporter YhdP (1266 aa).

The Cytoplasmic segment spans residues 1 to 5 (MRRLP). Residues 6–26 (GILLLTGAALVVIAALLVSGL) traverse the membrane as a helical segment. Residues 27–1266 (RIALPHLDAW…LRQPRKEKAQ (1240 aa)) are Periplasmic-facing. The interval 94–103 (VWQSLLHMRW) is P-helix. The C-helix_2 stretch occupies residues 1121–1144 (HAGQLLRLLSVDALMRKLRFDFRD). The tract at residues 1203–1237 (ISATVGVAAAFAVNPIVGAAVFAASKVLGPLWSKV) is C-helix_1.

The protein localises to the cell inner membrane. Functionally, involved in outer membrane lipid homeostasis. Likely transports phospholipids between the inner membrane and the outer membrane. It would provide a bridge-like structure that protects phospholipids as they travel across the periplasm. The phosphate-containing molecules are captured along the length of a hydrophobic groove that is continuous along all but the extreme N-terminus of the protein. It also appears to control, directly or indirectly, levels of cyclic enterobacterial common antigen (cyclic ECA), a soluble cyclic ECA molecule present in the periplasm. Its function is as follows. TamB, YdbH and YhdP are redundant, but not equivalent, in performing an essential function for growth and maintaining lipid homeostasis in the outer membrane. The transport functions of TamB and YhdP could be differentiated according to the fatty acid saturation state of the phospholipids, with TamB transporting more unsaturated phospholipids and YhdP more saturated phospholipids. Any of these three proteins is sufficient for growth. This Escherichia coli (strain K12) protein is Intermembrane phospholipid transporter YhdP (yhdP).